A 221-amino-acid chain; its full sequence is Lipoprotein-releasing system ATP-binding protein LolD (221 aa).

In terms of domain architecture, ABC transporter spans 6–220; sequence LILKNISKHY…YKLKHRLLNI (215 aa). ATP is bound at residue 42–49; sequence GSSGSGKS.

It belongs to the ABC transporter superfamily. Lipoprotein translocase (TC 3.A.1.125) family. In terms of assembly, the complex is composed of two ATP-binding proteins (LolD) and two transmembrane proteins (LolC and LolE).

It is found in the cell inner membrane. Part of the ABC transporter complex LolCDE involved in the translocation of mature outer membrane-directed lipoproteins, from the inner membrane to the periplasmic chaperone, LolA. Responsible for the formation of the LolA-lipoprotein complex in an ATP-dependent manner. In Rickettsia conorii (strain ATCC VR-613 / Malish 7), this protein is Lipoprotein-releasing system ATP-binding protein LolD.